Reading from the N-terminus, the 215-residue chain is Proapoptotic nucleolar protein 1 (215 aa).

The interval 35–215 (RKGTPTARCL…RLPAPRSAST (181 aa)) is disordered. Over residues 169 to 180 (PRPPQHLSPPQP) the composition is skewed to pro residues. Residues 185 to 215 (MGAAEGSRRADTHHARRRRRARLPAPRSAST) are necessary for nucleolar localization.

In terms of tissue distribution, widely expressed.

It is found in the nucleus. Its subcellular location is the nucleolus. Apoptosis-inducing protein that modulates the tumor suppressor function of CDKN2A/p14ARF. Enhances the stability of CDKN2A/p14ARF protein by protecting it from degradation. May act as a tumor suppressor. The polypeptide is Proapoptotic nucleolar protein 1 (Homo sapiens (Human)).